Here is a 367-residue protein sequence, read N- to C-terminus: tRNA 2-selenouridine synthase (367 aa).

The region spanning 14–137 (FLNDVPLMDV…LRRFLIDSLE (124 aa)) is the Rhodanese domain. The active-site S-selanylcysteine intermediate is the C97.

This sequence belongs to the SelU family. In terms of assembly, monomer.

It carries out the reaction 5-methylaminomethyl-2-thiouridine(34) in tRNA + selenophosphate + (2E)-geranyl diphosphate + H2O + H(+) = 5-methylaminomethyl-2-selenouridine(34) in tRNA + (2E)-thiogeraniol + phosphate + diphosphate. It catalyses the reaction 5-methylaminomethyl-2-thiouridine(34) in tRNA + (2E)-geranyl diphosphate = 5-methylaminomethyl-S-(2E)-geranyl-thiouridine(34) in tRNA + diphosphate. The enzyme catalyses 5-methylaminomethyl-S-(2E)-geranyl-thiouridine(34) in tRNA + selenophosphate + H(+) = 5-methylaminomethyl-2-(Se-phospho)selenouridine(34) in tRNA + (2E)-thiogeraniol. The catalysed reaction is 5-methylaminomethyl-2-(Se-phospho)selenouridine(34) in tRNA + H2O = 5-methylaminomethyl-2-selenouridine(34) in tRNA + phosphate. Its function is as follows. Involved in the post-transcriptional modification of the uridine at the wobble position (U34) of tRNA(Lys), tRNA(Glu) and tRNA(Gln). Catalyzes the conversion of 2-thiouridine (S2U-RNA) to 2-selenouridine (Se2U-RNA). Acts in a two-step process involving geranylation of 2-thiouridine (S2U) to S-geranyl-2-thiouridine (geS2U) and subsequent selenation of the latter derivative to 2-selenouridine (Se2U) in the tRNA chain. The protein is tRNA 2-selenouridine synthase of Marinobacter nauticus (strain ATCC 700491 / DSM 11845 / VT8) (Marinobacter aquaeolei).